We begin with the raw amino-acid sequence, 131 residues long: Small ribosomal subunit protein uS9 (131 aa).

Belongs to the universal ribosomal protein uS9 family.

The sequence is that of Small ribosomal subunit protein uS9 from Actinobacillus succinogenes (strain ATCC 55618 / DSM 22257 / CCUG 43843 / 130Z).